An 88-amino-acid polypeptide reads, in one-letter code: Large ribosomal subunit protein bL27 (88 aa).

The tract at residues 1–25 is disordered; that stretch reads MAHKKAGGSSRNGRDSPGQRRGIKR.

It belongs to the bacterial ribosomal protein bL27 family.

This chain is Large ribosomal subunit protein bL27 (rpmA), found in Lawsonia intracellularis.